A 116-amino-acid polypeptide reads, in one-letter code: Iron-sulfur cluster insertion protein ErpA (116 aa).

Iron-sulfur cluster-binding residues include Cys44, Cys108, and Cys110.

It belongs to the HesB/IscA family. In terms of assembly, homodimer. The cofactor is iron-sulfur cluster.

Required for insertion of 4Fe-4S clusters for at least IspG. This is Iron-sulfur cluster insertion protein ErpA from Shewanella halifaxensis (strain HAW-EB4).